A 459-amino-acid polypeptide reads, in one-letter code: Putrescine aminotransferase (459 aa).

Residues Gly-150 to Thr-151 and Gln-274 contribute to the pyridoxal 5'-phosphate site. Lys-300 is subject to N6-(pyridoxal phosphate)lysine. A pyridoxal 5'-phosphate-binding site is contributed by Thr-332.

It belongs to the class-III pyridoxal-phosphate-dependent aminotransferase family. Putrescine aminotransferase subfamily. The cofactor is pyridoxal 5'-phosphate.

The enzyme catalyses an alkane-alpha,omega-diamine + 2-oxoglutarate = an omega-aminoaldehyde + L-glutamate. It carries out the reaction putrescine + 2-oxoglutarate = 1-pyrroline + L-glutamate + H2O. It catalyses the reaction cadaverine + 2-oxoglutarate = 5-aminopentanal + L-glutamate. Its pathway is amine and polyamine degradation; putrescine degradation; 4-aminobutanal from putrescine (transaminase route): step 1/1. Functionally, catalyzes the aminotransferase reaction from putrescine to 2-oxoglutarate, leading to glutamate and 4-aminobutanal, which spontaneously cyclizes to form 1-pyrroline. This is the first step in one of two pathways for putrescine degradation, where putrescine is converted into 4-aminobutanoate (gamma-aminobutyrate or GABA) via 4-aminobutanal. Also functions as a cadaverine transaminase in a a L-lysine degradation pathway to succinate that proceeds via cadaverine, glutarate and L-2-hydroxyglutarate. This is Putrescine aminotransferase from Escherichia coli O6:H1 (strain CFT073 / ATCC 700928 / UPEC).